A 357-amino-acid chain; its full sequence is tRNA N6-adenosine threonylcarbamoyltransferase (357 aa).

2 residues coordinate Fe cation: histidine 115 and histidine 119. Residues 137 to 141, aspartate 170, glycine 183, and asparagine 281 contribute to the substrate site; that span reads LASGG. Position 309 (aspartate 309) interacts with Fe cation.

Belongs to the KAE1 / TsaD family. Requires Fe(2+) as cofactor.

It localises to the cytoplasm. It carries out the reaction L-threonylcarbamoyladenylate + adenosine(37) in tRNA = N(6)-L-threonylcarbamoyladenosine(37) in tRNA + AMP + H(+). Functionally, required for the formation of a threonylcarbamoyl group on adenosine at position 37 (t(6)A37) in tRNAs that read codons beginning with adenine. Is involved in the transfer of the threonylcarbamoyl moiety of threonylcarbamoyl-AMP (TC-AMP) to the N6 group of A37, together with TsaE and TsaB. TsaD likely plays a direct catalytic role in this reaction. In Nitrobacter hamburgensis (strain DSM 10229 / NCIMB 13809 / X14), this protein is tRNA N6-adenosine threonylcarbamoyltransferase.